A 169-amino-acid polypeptide reads, in one-letter code: NAD(P)H-quinone oxidoreductase subunit J, chloroplastic (169 aa).

Belongs to the complex I 30 kDa subunit family. In terms of assembly, NDH is composed of at least 16 different subunits, 5 of which are encoded in the nucleus.

It is found in the plastid. It localises to the chloroplast thylakoid membrane. The enzyme catalyses a plastoquinone + NADH + (n+1) H(+)(in) = a plastoquinol + NAD(+) + n H(+)(out). The catalysed reaction is a plastoquinone + NADPH + (n+1) H(+)(in) = a plastoquinol + NADP(+) + n H(+)(out). Its function is as follows. NDH shuttles electrons from NAD(P)H:plastoquinone, via FMN and iron-sulfur (Fe-S) centers, to quinones in the photosynthetic chain and possibly in a chloroplast respiratory chain. The immediate electron acceptor for the enzyme in this species is believed to be plastoquinone. Couples the redox reaction to proton translocation, and thus conserves the redox energy in a proton gradient. This Marchantia polymorpha (Common liverwort) protein is NAD(P)H-quinone oxidoreductase subunit J, chloroplastic.